Consider the following 724-residue polypeptide: Peroxidase mlt-7 (724 aa).

Positions 1-24 (MRRLHRNLSLLFLICILNEYRIES) are cleaved as a signal peptide. N7 carries an N-linked (GlcNAc...) asparagine glycan. The propeptide occupies 25 to 178 (QTLSPPITDR…GCVPQLSDVG (154 aa)). The region spanning 42–76 (CCDHHEWCRFWASIGECNANKDWMTENCQLACGTC) is the ShKT domain. C181 and C198 are oxidised to a cystine. Residue N233 is glycosylated (N-linked (GlcNAc...) asparagine). Catalysis depends on H271, which acts as the Proton acceptor. Residue D272 coordinates Ca(2+). A disulfide bond links C284 and C294. T335, Y337, D339, and S341 together coordinate Ca(2+). H493 contributes to the heme b binding site. Residues N509 and N617 are each glycosylated (N-linked (GlcNAc...) asparagine). Intrachain disulfides connect C588/C645 and C686/C710.

It belongs to the peroxidase family. Heme b serves as cofactor. As to expression, expressed in the hypodermal cells, specifically the head and seam/body.

It carries out the reaction 2 a phenolic donor + H2O2 = 2 a phenolic radical donor + 2 H2O. In terms of biological role, plays an essential role in cuticle biogenesis. Required in combination with bli-3 for correct formation of cross-links in cuticle collagens. In Caenorhabditis elegans, this protein is Peroxidase mlt-7.